The chain runs to 335 residues: Cytoplasmic envelopment protein 2 (335 aa).

It belongs to the herpesviridae cytoplasmic envelopment protein 2 family. Interacts with cytoplasmic envelopment protein 3 and with the capsid.

The protein resides in the virion tegument. The protein localises to the host cytoplasm. Its subcellular location is the host nucleus. Its function is as follows. Plays a critical role in cytoplasmic virus egress. Participates in the final step of tegumentation and envelope acquisition within the host cytoplasm by directly interacting with the capsid. Upon virion binding to target cell, a signaling cascade is triggered to disrupt the interaction with the capsid, thereby preparing capsid uncoating. The protein is Cytoplasmic envelopment protein 2 (U65) of Human herpesvirus 6B (strain Z29) (HHV-6 variant B).